The following is a 516-amino-acid chain: Katanin p60 ATPase-containing subunit A1 (516 aa).

Positions 75–212 (GFKSEPAAPE…DEKKFDPAGY (138 aa)) are disordered. Basic and acidic residues-rich tracts occupy residues 133–143 (ARKDPPRRSEP) and 155–167 (RGGR…RGDA). The span at 168-178 (RSGGGGRGGAR) shows a compositional bias: gly residues. Residues 179 to 212 (GSDKDKNRGGKSDKDKKAPSGEEGDEKKFDPAGY) show a composition bias toward basic and acidic residues. Residue 274 to 281 (GPPGTGKT) coordinates ATP.

It belongs to the AAA ATPase family. Katanin p60 subunit A1 subfamily. As to quaternary structure, can homooligomerize into hexameric rings, which may be promoted by interaction with microtubules. Interacts with KATNB1, which may serve as a targeting subunit.

It is found in the cytoplasm. Its subcellular location is the cytoskeleton. The protein resides in the microtubule organizing center. The protein localises to the centrosome. It localises to the spindle pole. It catalyses the reaction n ATP + n H2O + a microtubule = n ADP + n phosphate + (n+1) alpha/beta tubulin heterodimers.. ATPase activity is stimulated by microtubules, which promote homooligomerization. ATP-dependent microtubule severing is stimulated by interaction with KATNB1. Functionally, catalytic subunit of a complex which severs microtubules in an ATP-dependent manner. Microtubule severing may promote rapid reorganization of cellular microtubule arrays and the release of microtubules from the centrosome following nucleation. In mitotic spindles this could allow depolymerization of the microtubule end proximal to the centrosome, and subsequent poleward microtubule flux. This Strongylocentrotus purpuratus (Purple sea urchin) protein is Katanin p60 ATPase-containing subunit A1.